The chain runs to 319 residues: Homeobox protein Hox-B5a (319 aa).

The tract at residues 114 to 224 (SLLSPGSGDT…NTVGSEGQPP (111 aa)) is disordered. The span at 128-155 (RSSSPRSEQSGSGNLSSTNLSSSTNISS) shows a compositional bias: low complexity. The Antp-type hexapeptide motif lies at 226 to 231 (IFPWMR). The segment at residues 244–303 (GKRARTAYTRYQTLELEKEFHFNRYLTRRRRIEIAHALCLTERQIKIWFQNRRMKWKKDN) is a DNA-binding region (homeobox).

Belongs to the Antp homeobox family.

The protein resides in the nucleus. Its function is as follows. Sequence-specific transcription factor which is part of a developmental regulatory system that provides cells with specific positional identities on the anterior-posterior axis. In Takifugu rubripes (Japanese pufferfish), this protein is Homeobox protein Hox-B5a (hoxb5a).